A 277-amino-acid polypeptide reads, in one-letter code: Hematopoietically-expressed homeobox protein HHEX (277 aa).

Disordered stretches follow at residues alanine 47–phenylalanine 69 and tryptophan 199–arginine 277. Residues histidine 52–proline 63 show a composition bias toward pro residues. Positions arginine 144–lysine 203 form a DNA-binding region, homeobox. Positions threonine 210 to serine 226 are enriched in basic and acidic residues. The span at glutamate 250 to isoleucine 266 shows a compositional bias: acidic residues.

In all hematopoietic tissues except peripheral blood erythrocytes and in the liver and lung.

It is found in the nucleus. Functionally, recognizes the DNA sequence 5'-ATTAA-3'. Transcriptional repressor. May play a role in hematopoietic differentiation. The chain is Hematopoietically-expressed homeobox protein HHEX (HHEX) from Gallus gallus (Chicken).